The following is a 285-amino-acid chain: Type II restriction enzyme Cfr10I (285 aa).

D134 and E204 together coordinate Mg(2+).

As to quaternary structure, homodimer. It depends on Mg(2+) as a cofactor.

It carries out the reaction Endonucleolytic cleavage of DNA to give specific double-stranded fragments with terminal 5'-phosphates.. An F and P subtype restriction enzyme that recognizes the double-stranded sequence 5'-RCCGGY-3' and cleaves after R-1. The polypeptide is Type II restriction enzyme Cfr10I (cfr10IR) (Citrobacter freundii).